The primary structure comprises 313 residues: Solute carrier family 25 member 36 (313 aa).

Solcar repeat units lie at residues 4-110 (RDTL…CKEK), 118-205 (DSTQ…IKRK), and 226-310 (SDFV…VVYL). 6 helical membrane-spanning segments follow: residues 7–27 (LVHL…TCPL), 41–57 (LYIS…ASVN), 113–133 (NIFN…AGFT), 182–202 (MSAS…YESI), 228–248 (FVGM…IAYP), and 293–313 (QIPN…LLDG).

It belongs to the mitochondrial carrier (TC 2.A.29) family.

It localises to the mitochondrion inner membrane. In terms of biological role, mitochondrial transporter that imports/exports pyrimidine nucleotides into and from mitochondria. Transports preferentially cytosine and uracil (deoxy)nucleoside mono-, di-, and triphosphates by uniport and antiport mechanism. The sequence is that of Solute carrier family 25 member 36 (SLC25A36) from Gallus gallus (Chicken).